The following is a 279-amino-acid chain: NH(3)-dependent NAD(+) synthetase (279 aa).

Glycine 46 to serine 53 provides a ligand contact to ATP. Residue aspartate 52 participates in Mg(2+) binding. Residue arginine 145 coordinates deamido-NAD(+). Residue threonine 165 coordinates ATP. Position 170 (glutamate 170) interacts with Mg(2+). Deamido-NAD(+) is bound by residues lysine 178 and aspartate 185. The ATP site is built by lysine 194 and threonine 216. Residue histidine 265–lysine 266 participates in deamido-NAD(+) binding.

Belongs to the NAD synthetase family. In terms of assembly, homodimer.

The catalysed reaction is deamido-NAD(+) + NH4(+) + ATP = AMP + diphosphate + NAD(+) + H(+). Its pathway is cofactor biosynthesis; NAD(+) biosynthesis; NAD(+) from deamido-NAD(+) (ammonia route): step 1/1. In terms of biological role, catalyzes the ATP-dependent amidation of deamido-NAD to form NAD. Uses ammonia as a nitrogen source. The chain is NH(3)-dependent NAD(+) synthetase from Rhodococcus opacus (strain B4).